A 186-amino-acid chain; its full sequence is Large ribosomal subunit protein uL5 (186 aa).

It belongs to the universal ribosomal protein uL5 family. As to quaternary structure, part of the 50S ribosomal subunit; part of the 5S rRNA/L5/L18/L25 subcomplex. Contacts the 5S rRNA and the P site tRNA. Forms a bridge to the 30S subunit in the 70S ribosome.

Its function is as follows. This is one of the proteins that bind and probably mediate the attachment of the 5S RNA into the large ribosomal subunit, where it forms part of the central protuberance. In the 70S ribosome it contacts protein S13 of the 30S subunit (bridge B1b), connecting the 2 subunits; this bridge is implicated in subunit movement. Contacts the P site tRNA; the 5S rRNA and some of its associated proteins might help stabilize positioning of ribosome-bound tRNAs. The protein is Large ribosomal subunit protein uL5 of Phenylobacterium zucineum (strain HLK1).